Here is a 436-residue protein sequence, read N- to C-terminus: Transcriptional regulator VdtR (436 aa).

The zn(2)-C6 fungal-type DNA-binding region spans 17 to 44; the sequence is CDRCSANKVKCTQEKPECERCRLLSLPC. Disordered regions lie at residues 51–147 and 173–192; these read RIGK…HDKG and TAREDQKQHPELRSEEEYSD. Residues 125-141 show a composition bias toward polar residues; sequence SHNSNRPTNMASTNQDQ. A compositionally biased stretch (basic and acidic residues) spans 174–192; that stretch reads AREDQKQHPELRSEEEYSD.

It is found in the nucleus. Transcription factor that regulates expression of the viriditoxin biosynthesis cluster and viriditoxin synthesis. The chain is Transcriptional regulator VdtR from Byssochlamys spectabilis (Paecilomyces variotii).